The primary structure comprises 498 residues: L-ornithine N(5)-monooxygenase (498 aa).

FAD-binding positions include 80-88 (ERQKQFAWH) and glutamine 99. Lysine 104 is a binding site for substrate. Valine 165 contributes to the FAD binding site. Residues 251 to 254 (SGQS) and arginine 276 each bind NADP(+). Substrate is bound by residues 290 to 293 (NEVF) and asparagine 320. Residue 320-322 (NYS) coordinates NADP(+). FAD is bound at residue 463–465 (SLL). Serine 466 contacts substrate.

The protein belongs to the lysine N(6)-hydroxylase/L-ornithine N(5)-oxygenase family. Homotetramer. The cofactor is FAD.

The enzyme catalyses L-ornithine + NADPH + O2 = N(5)-hydroxy-L-ornithine + NADP(+) + H2O. It carries out the reaction L-ornithine + NADH + O2 = N(5)-hydroxy-L-ornithine + NAD(+) + H2O. It participates in siderophore biosynthesis. In terms of biological role, catalyzes the conversion of L-ornithine to N(5)-hydroxyornithine, the first step in the biosynthesis of all hydroxamate-containing siderophores, such as the secreted triacetylfusarinine C (TAFC) involved in iron uptake and the intracellular iron storage compound desferriferricrocin (DFFC). The polypeptide is L-ornithine N(5)-monooxygenase (Emericella nidulans (strain FGSC A4 / ATCC 38163 / CBS 112.46 / NRRL 194 / M139) (Aspergillus nidulans)).